A 30-amino-acid chain; its full sequence is 2-enoate reductase (30 aa).

In terms of assembly, dodecamer; tetramer of trimers. Requires iron-sulfur cluster as cofactor. FAD serves as cofactor. The cofactor is FMN.

It carries out the reaction butanoate + NAD(+) = (2E)-2-butenoate + NADH + H(+). Functionally, involved in fermentation of amino acids (Stickland reaction) such as leucine, isoleucine, valine and phenylalanine. This chain is 2-enoate reductase, found in Clostridium tyrobutyricum.